The following is a 442-amino-acid chain: tRNA-2-methylthio-N(6)-dimethylallyladenosine synthase (442 aa).

The MTTase N-terminal domain maps to Lys2 to Thr120. [4Fe-4S] cluster contacts are provided by Cys11, Cys49, Cys83, Cys157, Cys161, and Cys164. Residues Arg143–Arg375 enclose the Radical SAM core domain. Residues Gln378–Glu441 enclose the TRAM domain.

It belongs to the methylthiotransferase family. MiaB subfamily. Monomer. [4Fe-4S] cluster is required as a cofactor.

It is found in the cytoplasm. It catalyses the reaction N(6)-dimethylallyladenosine(37) in tRNA + (sulfur carrier)-SH + AH2 + 2 S-adenosyl-L-methionine = 2-methylsulfanyl-N(6)-dimethylallyladenosine(37) in tRNA + (sulfur carrier)-H + 5'-deoxyadenosine + L-methionine + A + S-adenosyl-L-homocysteine + 2 H(+). In terms of biological role, catalyzes the methylthiolation of N6-(dimethylallyl)adenosine (i(6)A), leading to the formation of 2-methylthio-N6-(dimethylallyl)adenosine (ms(2)i(6)A) at position 37 in tRNAs that read codons beginning with uridine. The protein is tRNA-2-methylthio-N(6)-dimethylallyladenosine synthase of Neisseria meningitidis serogroup C / serotype 2a (strain ATCC 700532 / DSM 15464 / FAM18).